Reading from the N-terminus, the 481-residue chain is Putative amino-acid transporter CPE0389 (481 aa).

13 helical membrane-spanning segments follow: residues 7–27, 36–56, 87–107, 127–147, 156–176, 208–228, 241–261, 289–309, 338–358, 364–384, 401–421, 422–442, and 461–481; these read LGVI…GVYN, ASAG…WFIA, FLMA…YAVL, LSIA…LAGV, IGTI…LFSF, STML…VVSG, FLGF…PLGV, VIMN…WTVM, FSLL…HFAG, MLSI…LYLF, RKYA…LIYA, AGIN…PVFI, and YFAI…FKFM.

Belongs to the amino acid-polyamine-organocation (APC) superfamily. Basic amino acid/polyamine antiporter (APA) (TC 2.A.3.2) family.

It localises to the cell membrane. In terms of biological role, could be an amino acid transporter. The chain is Putative amino-acid transporter CPE0389 from Clostridium perfringens (strain 13 / Type A).